Here is a 1086-residue protein sequence, read N- to C-terminus: Formin-like protein 2 (1086 aa).

The N-myristoyl glycine moiety is linked to residue glycine 2. A GBD/FH3 domain is found at 23–469; that stretch reads LPMPEPGELE…EAIQRQSTLE (447 aa). Serine 188 bears the Phosphoserine mark. Positions 513–597 are disordered; that stretch reads SVGPTMGAAS…APPLPSAPPL (85 aa). Residues 525–537 show a composition bias toward pro residues; that stretch reads PLPPPPPPLPPSS. Residues 538–547 show a composition bias toward polar residues; that stretch reads DTPETVQNGP. Pro residues-rich tracts occupy residues 548–576 and 583–597; these read VTPPMPPPPPPPPPPPPPPPPPPPPPLPG and PAPPLAPPLPSAPPL. The FH2 domain maps to 616 to 1007; that stretch reads IKKPIKTKFR…LMEKLLEQEA (392 aa). One can recognise a DAD domain in the interval 1040-1079; the sequence is NRHVYEGKDGAIEDIITVLKTVPFTARTAKRGSRFFCEPV.

It belongs to the formin homology family.

Its subcellular location is the cytoplasm. Its function is as follows. Plays a role in the regulation of cell morphology and cytoskeletal organization. Required in the cortical actin filament dynamics. The polypeptide is Formin-like protein 2 (Homo sapiens (Human)).